A 216-amino-acid chain; its full sequence is Glutathione S-transferase 1, isoform B (216 aa).

The region spanning methionine 1–cysteine 80 is the GST N-terminal domain. Glutathione-binding positions include serine 9, histidine 50–valine 52, and glutamate 64–arginine 66. The GST C-terminal domain occupies aspartate 89–phenylalanine 210.

The protein belongs to the GST superfamily. Theta family. Homodimer.

It catalyses the reaction RX + glutathione = an S-substituted glutathione + a halide anion + H(+). Conjugation of reduced glutathione to a wide number of exogenous and endogenous hydrophobic electrophiles. The polypeptide is Glutathione S-transferase 1, isoform B (Anopheles gambiae (African malaria mosquito)).